The chain runs to 509 residues: MEEIHRYLQPDSSQQHNFLYPLIFQEYIYALAQDHGLNRNRSILLENSGYNNKFSFLIVKRLITRMDQQNHLIISTNDSNKNPFLGCNKSLYSQMISEGFACIVEIPFSIRLISSLSSFEGKKIFKSHNLRSIHSTFPFLEDNFSHLNYVLDILIPYPVHLEILVQTLRYWVKDASSLHLLRFFLHEYCNLNSLITSKKPGYSFSKKNQRFFFFLYNSYVYECESTFVFLRNQSSHLRSTSFGALLERIYFYGKIERLVEAFAKDFQVTLWLFKDPVMHYVRYEGKSILASKGTFPWMNKWKFYLVNFWQCHFSMYFNTGRIHINQLSNHSRDFMGYLSSVRLNHSMVRSQMLENSFLINNPIKKFDTLVPIIPLIGSLAKAHFCTGLGHPISKPVWSDLSDSDIIDRFGRICRNLFHYYSGSSKKKTLYRIKYILRLSCARTLARKHKSTVRTFLKRSGSELLEEFLTSEEEVLSLTFPRASSSLWGVYRSRIWYLDIFCINDLANSQ.

It belongs to the intron maturase 2 family. MatK subfamily.

It is found in the plastid. The protein localises to the chloroplast. In terms of biological role, usually encoded in the trnK tRNA gene intron. Probably assists in splicing its own and other chloroplast group II introns. The chain is Maturase K from Solanum lycopersicum (Tomato).